Here is a 261-residue protein sequence, read N- to C-terminus: MTLGKNKRISKGGKRGKKKAQETMSRKEWYDVVAPKNFEVRQFGKTICNKTQGTKIAADYLRGRVYESNLADLNKTQGDDDAYRKVKFVVQEVQGRNLLTQFHSMEMTSDRVYFLLRKWCTTIEAAVEAKTADGYTLRLFVIAFTKKQSNQLSKNCYAKTRLVKWVRHRITNLIRQRLSKVNINEAVTLLTRNILRDRLAKRCNPIVPLRDLRIRKVKVVRTPRFDAQALLNAHGEIPASAEGEARVVEEAQEAPAAEATA.

The segment covering 1–18 has biased composition (basic residues); the sequence is MTLGKNKRISKGGKRGKK. A disordered region spans residues 1–23; that stretch reads MTLGKNKRISKGGKRGKKKAQET.

The protein belongs to the eukaryotic ribosomal protein eS1 family. As to quaternary structure, component of the small ribosomal subunit. Mature ribosomes consist of a small (40S) and a large (60S) subunit. The 40S subunit contains about 33 different proteins and 1 molecule of RNA (18S). The 60S subunit contains about 49 different proteins and 3 molecules of RNA (25S, 5.8S and 5S).

The protein localises to the cytoplasm. The polypeptide is Small ribosomal subunit protein eS1B (Trypanosoma cruzi (strain CL Brener)).